The sequence spans 345 residues: uncharacterized protein (345 aa).

This sequence belongs to the methyltransferase superfamily.

This is an uncharacterized protein from Streptomyces fradiae (Streptomyces roseoflavus).